Consider the following 30-residue polypeptide: Arsenate respiratory reductase iron-sulfur subunit ArrB (30 aa).

Residues Cys12, Cys15, Cys18, and Cys22 each coordinate [4Fe-4S] cluster.

Heterodimer composed of one large subunit (ArrA) and one small subunit (ArrB). It depends on [4Fe-4S] cluster as a cofactor.

The protein resides in the periplasm. Functionally, component of the arsenate respiratory reductase (Arr) complex, which catalyzes the reduction of arsenate (As(V)) to arsenite (As(III)). ArrB is probably the electron transfer subunit. This is Arsenate respiratory reductase iron-sulfur subunit ArrB from Chrysiogenes arsenatis.